A 950-amino-acid polypeptide reads, in one-letter code: Bifunctional glutamine synthetase adenylyltransferase/adenylyl-removing enzyme (950 aa).

The interval 1–443 (MSLPSPLLPV…VFVTLIGDEE (443 aa)) is adenylyl removase. Residues 450–950 (ERHFNELWDM…WQEWLESSTI (501 aa)) form an adenylyl transferase region.

It belongs to the GlnE family. The cofactor is Mg(2+).

It catalyses the reaction [glutamine synthetase]-O(4)-(5'-adenylyl)-L-tyrosine + phosphate = [glutamine synthetase]-L-tyrosine + ADP. The catalysed reaction is [glutamine synthetase]-L-tyrosine + ATP = [glutamine synthetase]-O(4)-(5'-adenylyl)-L-tyrosine + diphosphate. Functionally, involved in the regulation of glutamine synthetase GlnA, a key enzyme in the process to assimilate ammonia. When cellular nitrogen levels are high, the C-terminal adenylyl transferase (AT) inactivates GlnA by covalent transfer of an adenylyl group from ATP to specific tyrosine residue of GlnA, thus reducing its activity. Conversely, when nitrogen levels are low, the N-terminal adenylyl removase (AR) activates GlnA by removing the adenylyl group by phosphorolysis, increasing its activity. The regulatory region of GlnE binds the signal transduction protein PII (GlnB) which indicates the nitrogen status of the cell. In Vibrio vulnificus (strain YJ016), this protein is Bifunctional glutamine synthetase adenylyltransferase/adenylyl-removing enzyme.